A 202-amino-acid chain; its full sequence is NADH-quinone oxidoreductase subunit B (202 aa).

[4Fe-4S] cluster-binding residues include C81, C82, C146, and C176.

This sequence belongs to the complex I 20 kDa subunit family. In terms of assembly, NDH-1 is composed of 14 different subunits. Subunits NuoB, C, D, E, F, and G constitute the peripheral sector of the complex. [4Fe-4S] cluster is required as a cofactor.

It is found in the cell inner membrane. The catalysed reaction is a quinone + NADH + 5 H(+)(in) = a quinol + NAD(+) + 4 H(+)(out). Its function is as follows. NDH-1 shuttles electrons from NADH, via FMN and iron-sulfur (Fe-S) centers, to quinones in the respiratory chain. The immediate electron acceptor for the enzyme in this species is believed to be ubiquinone. Couples the redox reaction to proton translocation (for every two electrons transferred, four hydrogen ions are translocated across the cytoplasmic membrane), and thus conserves the redox energy in a proton gradient. This Bradyrhizobium diazoefficiens (strain JCM 10833 / BCRC 13528 / IAM 13628 / NBRC 14792 / USDA 110) protein is NADH-quinone oxidoreductase subunit B.